A 241-amino-acid polypeptide reads, in one-letter code: 6-phosphogluconolactonase (241 aa).

It belongs to the glucosamine/galactosamine-6-phosphate isomerase family. 6-phosphogluconolactonase subfamily.

The enzyme catalyses 6-phospho-D-glucono-1,5-lactone + H2O = 6-phospho-D-gluconate + H(+). The protein operates within carbohydrate degradation; pentose phosphate pathway; D-ribulose 5-phosphate from D-glucose 6-phosphate (oxidative stage): step 2/3. Hydrolysis of 6-phosphogluconolactone to 6-phosphogluconate. The polypeptide is 6-phosphogluconolactonase (pgl) (Treponema pallidum (strain Nichols)).